A 328-amino-acid polypeptide reads, in one-letter code: Arabinose 5-phosphate isomerase KdsD (328 aa).

An SIS domain is found at Ala-41–Phe-184. Residues Gly-75 to Thr-76, His-82, His-88, Ala-114 to His-123, and Lys-148 to Pro-150 contribute to the substrate site. His-82 serves as a coordination point for Zn(2+). The 59-residue stretch at Met-210–Met-268 folds into the CBS 1 domain. Glu-275 contributes to the substrate binding site. The 52-residue stretch at Met-277–Val-328 folds into the CBS 2 domain.

Belongs to the SIS family. GutQ/KpsF subfamily. As to quaternary structure, homotetramer.

It carries out the reaction D-arabinose 5-phosphate = D-ribulose 5-phosphate. The protein operates within carbohydrate biosynthesis; 3-deoxy-D-manno-octulosonate biosynthesis; 3-deoxy-D-manno-octulosonate from D-ribulose 5-phosphate: step 1/3. It functions in the pathway bacterial outer membrane biogenesis; lipopolysaccharide biosynthesis. In terms of biological role, involved in the biosynthesis of 3-deoxy-D-manno-octulosonate (KDO), a unique 8-carbon sugar component of lipopolysaccharides (LPSs). Catalyzes the reversible aldol-ketol isomerization between D-ribulose 5-phosphate (Ru5P) and D-arabinose 5-phosphate (A5P). The chain is Arabinose 5-phosphate isomerase KdsD (kdsD) from Salmonella typhimurium (strain LT2 / SGSC1412 / ATCC 700720).